The following is a 232-amino-acid chain: Phosphatidylserine decarboxylase proenzyme (232 aa).

The active-site Schiff-base intermediate with substrate; via pyruvic acid is Ser-190. Ser-190 is subject to Pyruvic acid (Ser); by autocatalysis.

It belongs to the phosphatidylserine decarboxylase family. PSD-A subfamily. Heterodimer of a large membrane-associated beta subunit and a small pyruvoyl-containing alpha subunit. It depends on pyruvate as a cofactor. Post-translationally, is synthesized initially as an inactive proenzyme. Formation of the active enzyme involves a self-maturation process in which the active site pyruvoyl group is generated from an internal serine residue via an autocatalytic post-translational modification. Two non-identical subunits are generated from the proenzyme in this reaction, and the pyruvate is formed at the N-terminus of the alpha chain, which is derived from the carboxyl end of the proenzyme. The post-translation cleavage follows an unusual pathway, termed non-hydrolytic serinolysis, in which the side chain hydroxyl group of the serine supplies its oxygen atom to form the C-terminus of the beta chain, while the remainder of the serine residue undergoes an oxidative deamination to produce ammonia and the pyruvoyl prosthetic group on the alpha chain.

Its subcellular location is the cell membrane. It catalyses the reaction a 1,2-diacyl-sn-glycero-3-phospho-L-serine + H(+) = a 1,2-diacyl-sn-glycero-3-phosphoethanolamine + CO2. Its pathway is phospholipid metabolism; phosphatidylethanolamine biosynthesis; phosphatidylethanolamine from CDP-diacylglycerol: step 2/2. Catalyzes the formation of phosphatidylethanolamine (PtdEtn) from phosphatidylserine (PtdSer). This is Phosphatidylserine decarboxylase proenzyme from Rhodopseudomonas palustris (strain BisB5).